The chain runs to 74 residues: UPF0346 protein BPUM_1890 (74 aa).

It belongs to the UPF0346 family.

The polypeptide is UPF0346 protein BPUM_1890 (Bacillus pumilus (strain SAFR-032)).